The sequence spans 51 residues: Large ribosomal subunit protein bL33 (51 aa).

It belongs to the bacterial ribosomal protein bL33 family.

The protein is Large ribosomal subunit protein bL33 of Idiomarina loihiensis (strain ATCC BAA-735 / DSM 15497 / L2-TR).